Reading from the N-terminus, the 442-residue chain is Armadillo-like helical domain containing protein 1 (442 aa).

The chain is Armadillo-like helical domain containing protein 1 from Bos taurus (Bovine).